The primary structure comprises 361 residues: Queuine tRNA-ribosyltransferase (361 aa).

Catalysis depends on aspartate 92, which acts as the Proton acceptor. Residues 92 to 96 (DSGGF), aspartate 146, glutamine 189, and glycine 216 contribute to the substrate site. The tract at residues 247–253 (GVGKPAD) is RNA binding. Aspartate 266 acts as the Nucleophile in catalysis. The segment at 271–275 (TRSGR) is RNA binding; important for wobble base 34 recognition. Residues cysteine 304, cysteine 306, cysteine 309, and histidine 335 each contribute to the Zn(2+) site.

This sequence belongs to the queuine tRNA-ribosyltransferase family. In terms of assembly, homodimer. Within each dimer, one monomer is responsible for RNA recognition and catalysis, while the other monomer binds to the replacement base PreQ1. The cofactor is Zn(2+).

The enzyme catalyses 7-aminomethyl-7-carbaguanine + guanosine(34) in tRNA = 7-aminomethyl-7-carbaguanosine(34) in tRNA + guanine. It functions in the pathway tRNA modification; tRNA-queuosine biosynthesis. In terms of biological role, catalyzes the base-exchange of a guanine (G) residue with the queuine precursor 7-aminomethyl-7-deazaguanine (PreQ1) at position 34 (anticodon wobble position) in tRNAs with GU(N) anticodons (tRNA-Asp, -Asn, -His and -Tyr). Catalysis occurs through a double-displacement mechanism. The nucleophile active site attacks the C1' of nucleotide 34 to detach the guanine base from the RNA, forming a covalent enzyme-RNA intermediate. The proton acceptor active site deprotonates the incoming PreQ1, allowing a nucleophilic attack on the C1' of the ribose to form the product. After dissociation, two additional enzymatic reactions on the tRNA convert PreQ1 to queuine (Q), resulting in the hypermodified nucleoside queuosine (7-(((4,5-cis-dihydroxy-2-cyclopenten-1-yl)amino)methyl)-7-deazaguanosine). The protein is Queuine tRNA-ribosyltransferase of Rickettsia felis (strain ATCC VR-1525 / URRWXCal2) (Rickettsia azadi).